Here is a 158-residue protein sequence, read N- to C-terminus: Glutamyl-tRNA(Gln) amidotransferase subunit C, mitochondrial (158 aa).

The protein belongs to the GatC family. Subunit of the heterotrimeric GatCAB amidotransferase (AdT) complex, composed of A, B and C subunits.

The protein localises to the mitochondrion. The enzyme catalyses L-glutamyl-tRNA(Gln) + L-glutamine + ATP + H2O = L-glutaminyl-tRNA(Gln) + L-glutamate + ADP + phosphate + H(+). In terms of biological role, allows the formation of correctly charged Gln-tRNA(Gln) through the transamidation of misacylated Glu-tRNA(Gln) in the mitochondria. The reaction takes place in the presence of glutamine and ATP through an activated gamma-phospho-Glu-tRNA(Gln). The protein is Glutamyl-tRNA(Gln) amidotransferase subunit C, mitochondrial of Drosophila grimshawi (Hawaiian fruit fly).